Reading from the N-terminus, the 408-residue chain is MWAFPELPLPLLVNLFGSLLGFVATVTLIPAFRSHFIAARLCGQDLNKLSRQQIPESQGVICGAVFLIILFCFIPFPFLNCFVEEQCKAFPHHEFVALIGALLAICCMIFLGFADDVLNLRWRHKLLLPTAASLPLLMVYFTNFGNTTIVVPKPFRWILGLHLDLGILYYVYMGLLAVFCTNAINILAGINGLEAGQSLVISASIIVFNLVELEGDYRDDHVFSLYFMIPFFFTTLGLLYHNWYPSQVFVGDTFCYFAGMTFAVVGILGHFSKTMLLFFIPQVFNFLYSLPQLLHAIPCPRHRIPRLNPKTGKLEMSYSKFKTKNLSFLGTFILKVAERLQLVTVHRGESEDGAFTECNNMTLINLLLKIFGPIHERNLTLLLLLLQILSSAVTFSIRYQLVRLFYDV.

Residues 1–10 are Lumenal-facing; it reads MWAFPELPLP. The chain crosses the membrane as a helical span at residues 11-38; sequence LLVNLFGSLLGFVATVTLIPAFRSHFIA. Topologically, residues 39–58 are cytoplasmic; the sequence is ARLCGQDLNKLSRQQIPESQ. UDP-N-acetyl-alpha-D-glucosamine-binding positions include 44-46 and E56; that span reads QDL. The helical transmembrane segment at 59–78 threads the bilayer; sequence GVICGAVFLIILFCFIPFPF. The Lumenal portion of the chain corresponds to 79 to 91; that stretch reads LNCFVEEQCKAFP. A helical membrane pass occupies residues 92–118; it reads HHEFVALIGALLAICCMIFLGFADDVL. Over 119–121 the chain is Cytoplasmic; the sequence is NLR. The chain crosses the membrane as a helical span at residues 122–143; sequence WRHKLLLPTAASLPLLMVYFTN. Residue K125 participates in dolichyl phosphate binding. The Lumenal portion of the chain corresponds to 144–166; it reads FGNTTIVVPKPFRWILGLHLDLG. Residue N146 is glycosylated (N-linked (GlcNAc...) asparagine). Residues 167–186 form a helical membrane-spanning segment; it reads ILYYVYMGLLAVFCTNAINI. A dolichyl phosphate-binding site is contributed by 178–186; the sequence is VFCTNAINI. N185 serves as a coordination point for Mg(2+). Topologically, residues 187–192 are cytoplasmic; that stretch reads LAGING. N191 contributes to the UDP-N-acetyl-alpha-D-glucosamine binding site. A helical transmembrane segment spans residues 193-213; sequence LEAGQSLVISASIIVFNLVEL. Residues 214–218 lie on the Lumenal side of the membrane; the sequence is EGDYR. Residues 219–242 form a helical membrane-spanning segment; the sequence is DDHVFSLYFMIPFFFTTLGLLYHN. Residues 243–250 lie on the Cytoplasmic side of the membrane; it reads WYPSQVFV. Residues 251–269 form a helical membrane-spanning segment; the sequence is GDTFCYFAGMTFAVVGILG. Position 252 (D252) interacts with Mg(2+). Over 270–271 the chain is Lumenal; sequence HF. A helical transmembrane segment spans residues 272-293; the sequence is SKTMLLFFIPQVFNFLYSLPQL. The Cytoplasmic segment spans residues 294 to 375; sequence LHAIPCPRHR…LLLKIFGPIH (82 aa). Position 301 to 303 (301 to 303) interacts with UDP-N-acetyl-alpha-D-glucosamine; that stretch reads RHR. The chain crosses the membrane as a helical span at residues 376-400; sequence ERNLTLLLLLLQILSSAVTFSIRYQ. Residues 401-408 lie on the Lumenal side of the membrane; sequence LVRLFYDV.

It belongs to the glycosyltransferase 4 family. In terms of assembly, homodimer. The cofactor is Mg(2+).

Its subcellular location is the endoplasmic reticulum membrane. It catalyses the reaction a di-trans,poly-cis-dolichyl phosphate + UDP-N-acetyl-alpha-D-glucosamine = an N-acetyl-alpha-D-glucosaminyl-diphospho-di-trans,poly-cis-dolichol + UMP. It functions in the pathway protein modification; protein glycosylation. With respect to regulation, inhibited by natural nucleoside antibiotic tunicamycin, which acts as a structural analog and competitor of UDP-GlcNAc. Its function is as follows. UDP-N-acetylglucosamine--dolichyl-phosphate N-acetylglucosaminephosphotransferase that operates in the biosynthetic pathway of dolichol-linked oligosaccharides, the glycan precursors employed in protein asparagine (N)-glycosylation. The assembly of dolichol-linked oligosaccharides begins on the cytosolic side of the endoplasmic reticulum membrane and finishes in its lumen. The sequential addition of sugars to dolichol pyrophosphate produces dolichol-linked oligosaccharides containing fourteen sugars, including two GlcNAcs, nine mannoses and three glucoses. Once assembled, the oligosaccharide is transferred from the lipid to nascent proteins by oligosaccharyltransferases. Catalyzes the initial step of dolichol-linked oligosaccharide biosynthesis, transfering GlcNAc-1-P from cytosolic UDP-GlcNAc onto the carrier lipid dolichyl phosphate (P-dolichol), yielding GlcNAc-P-P-dolichol embedded in the cytoplasmic leaflet of the endoplasmic reticulum membrane. This is UDP-N-acetylglucosamine--dolichyl-phosphate N-acetylglucosaminephosphotransferase (DPAGT1) from Cricetulus griseus (Chinese hamster).